Consider the following 175-residue polypeptide: Adenine phosphoribosyltransferase (175 aa).

Belongs to the purine/pyrimidine phosphoribosyltransferase family. In terms of assembly, homodimer.

It localises to the cytoplasm. The enzyme catalyses AMP + diphosphate = 5-phospho-alpha-D-ribose 1-diphosphate + adenine. It functions in the pathway purine metabolism; AMP biosynthesis via salvage pathway; AMP from adenine: step 1/1. Catalyzes a salvage reaction resulting in the formation of AMP, that is energically less costly than de novo synthesis. This is Adenine phosphoribosyltransferase from Thermosipho melanesiensis (strain DSM 12029 / CIP 104789 / BI429).